Here is a 561-residue protein sequence, read N- to C-terminus: Long-chain-fatty-acid--CoA ligase (561 aa).

Residue 213 to 224 participates in ATP binding; the sequence is YTGGTTGVAKGA.

This sequence belongs to the ATP-dependent AMP-binding enzyme family. Mg(2+) is required as a cofactor.

The protein resides in the membrane. The catalysed reaction is a long-chain fatty acid + ATP + CoA = a long-chain fatty acyl-CoA + AMP + diphosphate. It participates in lipid metabolism; fatty acid beta-oxidation. Catalyzes the esterification, concomitant with transport, of exogenous long-chain fatty acids into metabolically active CoA thioesters for subsequent degradation or incorporation into phospholipids. This chain is Long-chain-fatty-acid--CoA ligase (fadD), found in Escherichia coli O157:H7.